The chain runs to 495 residues: ATP synthase subunit beta, chloroplastic (495 aa).

Gly172 to Thr179 contacts ATP.

It belongs to the ATPase alpha/beta chains family. In terms of assembly, F-type ATPases have 2 components, CF(1) - the catalytic core - and CF(0) - the membrane proton channel. CF(1) has five subunits: alpha(3), beta(3), gamma(1), delta(1), epsilon(1). CF(0) has four main subunits: a(1), b(1), b'(1) and c(9-12).

Its subcellular location is the plastid. The protein localises to the chloroplast thylakoid membrane. It catalyses the reaction ATP + H2O + 4 H(+)(in) = ADP + phosphate + 5 H(+)(out). Its function is as follows. Produces ATP from ADP in the presence of a proton gradient across the membrane. The catalytic sites are hosted primarily by the beta subunits. This chain is ATP synthase subunit beta, chloroplastic, found in Scilla messeniaca (Greek squill).